The sequence spans 427 residues: L-rhamnose isomerase (427 aa).

Mn(2+)-binding residues include H264, D296, and D298.

It belongs to the rhamnose isomerase family. It depends on Mn(2+) as a cofactor.

The protein resides in the cytoplasm. It carries out the reaction L-rhamnopyranose = L-rhamnulose. It functions in the pathway carbohydrate degradation; L-rhamnose degradation; glycerone phosphate from L-rhamnose: step 1/3. Catalyzes the interconversion of L-rhamnose and L-rhamnulose. The polypeptide is L-rhamnose isomerase (Lactiplantibacillus plantarum (strain ATCC BAA-793 / NCIMB 8826 / WCFS1) (Lactobacillus plantarum)).